A 508-amino-acid polypeptide reads, in one-letter code: Maturase K (508 aa).

It belongs to the intron maturase 2 family. MatK subfamily.

Its subcellular location is the plastid. It localises to the chloroplast. Its function is as follows. Usually encoded in the trnK tRNA gene intron. Probably assists in splicing its own and other chloroplast group II introns. In Chaetosphaeridium globosum (Charophycean green alga), this protein is Maturase K.